Consider the following 212-residue polypeptide: Abscisic acid receptor PYL10 (212 aa).

An START-like region spans residues Tyr34–Glu191. Abscisate contacts are provided by residues Lys70, Ala107–Glu112, Arg134–Ser140, and Glu156. A Gate loop motif is present at residues Ser103–Ala107. Positions His133–Leu135 match the Latch loop motif.

Belongs to the PYR/PYL/RCAR abscisic acid intracellular receptor family. As to quaternary structure, homodimer. Interacts with PP2C53. Binding to PP2C53 is dependent on the presence of abscisic acid (ABA). Interacts with PP2C50. Binding to PP2C50 is dependent on the presence of ABA.

Its subcellular location is the cytoplasm. It localises to the cytosol. The protein localises to the nucleus. Its function is as follows. Inhibits the protein phosphatases PP2C06 and PP2C09 when activated by abscisic acid (ABA). Together with PP2C53, SAPK8 and SAPK10, may form an ABA signaling module involved in stress response. The protein is Abscisic acid receptor PYL10 of Oryza sativa subsp. japonica (Rice).